The chain runs to 602 residues: Fructan 1-exohydrolase (602 aa).

The first 19 residues, 1–19 (MAQAWAFLLLPVLLLSSYA), serve as a signal peptide directing secretion. The active site involves Asp81. Residues Asn174, Asn242, and Asn254 are each glycosylated (N-linked (GlcNAc...) asparagine). Residues Cys452 and Cys498 are joined by a disulfide bond.

This sequence belongs to the glycosyl hydrolase 32 family. Detected in leaves, with maximum levels at the leaf tip.

It catalyses the reaction Hydrolysis of terminal, non-reducing (2-&gt;1)-linked beta-D-fructofuranose residues in fructans.. Inhibited by sucrose. Functionally, hydrolyzes inulin-type beta-(2,1)-fructans. Has low activity against beta-(2,6)-linked fructans. May play a role as a beta-(2,1)-trimmer during graminan biosynthesis. The protein is Fructan 1-exohydrolase of Bromus pictus (Patagonian grass).